A 205-amino-acid polypeptide reads, in one-letter code: CASP-like protein 2A1 (205 aa).

Residues 1 to 35 (MMGDKGEKECATASSPIELGCGEGDESGNKSSMRT) lie on the Cytoplasmic side of the membrane. Residues 36-56 (VETLLRLVPVALCTVSLVVML) traverse the membrane as a helical segment. Topologically, residues 57–77 (KNSQTNDFGSLSYSDLGAFRY) are extracellular. The helical transmembrane segment at 78–98 (LVHANGICAGYSLLSAIFTAM) threads the bilayer. The Cytoplasmic portion of the chain corresponds to 99–106 (PRPPTMSR). Residues 107–127 (AWTFFLLDQVLTYLILAAGAV) form a helical membrane-spanning segment. The Extracellular segment spans residues 128 to 157 (STEVVYLAYKGDEAVTWSDACSSFGGFCQK). A helical membrane pass occupies residues 158–178 (TTASISITFVTVLCYAVLSLI). Residues 179–205 (SSYKLFSKYDAPICFNGKGIEIAAFHS) lie on the Cytoplasmic side of the membrane.

Belongs to the Casparian strip membrane proteins (CASP) family. As to quaternary structure, homodimer and heterodimers.

The protein resides in the cell membrane. This is CASP-like protein 2A1 from Vitis vinifera (Grape).